A 171-amino-acid chain; its full sequence is ATP synthase subunit b (171 aa).

A helical membrane pass occupies residues Phe-2–Leu-22.

The protein belongs to the ATPase B chain family. In terms of assembly, F-type ATPases have 2 components, F(1) - the catalytic core - and F(0) - the membrane proton channel. F(1) has five subunits: alpha(3), beta(3), gamma(1), delta(1), epsilon(1). F(0) has three main subunits: a(1), b(2) and c(10-14). The alpha and beta chains form an alternating ring which encloses part of the gamma chain. F(1) is attached to F(0) by a central stalk formed by the gamma and epsilon chains, while a peripheral stalk is formed by the delta and b chains.

It localises to the cell inner membrane. F(1)F(0) ATP synthase produces ATP from ADP in the presence of a proton or sodium gradient. F-type ATPases consist of two structural domains, F(1) containing the extramembraneous catalytic core and F(0) containing the membrane proton channel, linked together by a central stalk and a peripheral stalk. During catalysis, ATP synthesis in the catalytic domain of F(1) is coupled via a rotary mechanism of the central stalk subunits to proton translocation. In terms of biological role, component of the F(0) channel, it forms part of the peripheral stalk, linking F(1) to F(0). The chain is ATP synthase subunit b from Helicobacter pylori (strain J99 / ATCC 700824) (Campylobacter pylori J99).